Reading from the N-terminus, the 357-residue chain is RNA 3'-terminal phosphate cyclase (357 aa).

Residues Gln102 and His293–Asp296 contribute to the ATP site. Catalysis depends on His319, which acts as the Tele-AMP-histidine intermediate.

This sequence belongs to the RNA 3'-terminal cyclase family. Type 1 subfamily.

The protein resides in the cytoplasm. It catalyses the reaction a 3'-end 3'-phospho-ribonucleotide-RNA + ATP = a 3'-end 2',3'-cyclophospho-ribonucleotide-RNA + AMP + diphosphate. Its function is as follows. Catalyzes the conversion of 3'-phosphate to a 2',3'-cyclic phosphodiester at the end of RNA. The mechanism of action of the enzyme occurs in 3 steps: (A) adenylation of the enzyme by ATP; (B) transfer of adenylate to an RNA-N3'P to produce RNA-N3'PP5'A; (C) and attack of the adjacent 2'-hydroxyl on the 3'-phosphorus in the diester linkage to produce the cyclic end product. The biological role of this enzyme is unknown but it is likely to function in some aspects of cellular RNA processing. This is RNA 3'-terminal phosphate cyclase from Desulfurococcus amylolyticus (strain DSM 18924 / JCM 16383 / VKM B-2413 / 1221n) (Desulfurococcus kamchatkensis).